Consider the following 25-residue polypeptide: Ocellatin-F1 (25 aa).

Leucine 25 is subject to Leucine amide.

The protein belongs to the frog skin active peptide (FSAP) family. Ocellatin subfamily. As to expression, expressed by the skin glands.

It localises to the secreted. Antibacterial peptide that inhibits reference strains of both Gram-negative bacteria (E.coli, P.aeruginosa, E.cloacae, K.pneumoniae, and A.actinomycetemcomitans) and Gram-positive bacteria (S.aureus) with relatively low potencies (MIC=25-400 uM). Shows antifungal activity against C.lusitaniae (MIC=50.25 uM), but no activity against C.albicans. In the presence of an alkaloid (bufotenine), inhibits cellular infection by the rabies virus. The peptide shows very low hemolytic activity against rabbit erythrocytes. The low amphipathicity of alpha-helices demonstrated by wheel projection as well as the low cationicity may explain the low antibacterial and hemolytic potencies. In Leptodactylus labyrinthicus (Labyrinth frog), this protein is Ocellatin-F1.